A 227-amino-acid polypeptide reads, in one-letter code: MAAEIILRLERIGRAYKEADRELIILNDADFTLRRGEMVALVAPSGAGKSTLLHTAGLLERPDSGDVVLDGRSCSKLSDDERTAVRRNDVGFVYQFHHLLPEFSALENVMLPQMIRGLSRKAAAERAQQLLEYMKIGKRASHRPAELSGGEQQRVAIARAVANAPLVLLADEPTGNLDPTTSSYVFGALEALVRQSGLAALIATHNHELARRMDRRVTLKDGRVVDL.

The ABC transporter domain maps to 7–227 (LRLERIGRAY…TLKDGRVVDL (221 aa)). ATP is bound at residue 43–50 (APSGAGKS).

This sequence belongs to the ABC transporter superfamily. Lipoprotein translocase (TC 3.A.1.125) family. The complex is composed of two ATP-binding proteins (LolD) and two transmembrane proteins (LolC and LolE).

It localises to the cell inner membrane. Its function is as follows. Part of the ABC transporter complex LolCDE involved in the translocation of mature outer membrane-directed lipoproteins, from the inner membrane to the periplasmic chaperone, LolA. Responsible for the formation of the LolA-lipoprotein complex in an ATP-dependent manner. The chain is Lipoprotein-releasing system ATP-binding protein LolD from Brucella abortus biovar 1 (strain 9-941).